A 463-amino-acid polypeptide reads, in one-letter code: ATP synthase subunit beta (463 aa).

151–158 (GGAGVGKT) serves as a coordination point for ATP.

This sequence belongs to the ATPase alpha/beta chains family. In terms of assembly, F-type ATPases have 2 components, CF(1) - the catalytic core - and CF(0) - the membrane proton channel. CF(1) has five subunits: alpha(3), beta(3), gamma(1), delta(1), epsilon(1). CF(0) has three main subunits: a(1), b(2) and c(9-12). The alpha and beta chains form an alternating ring which encloses part of the gamma chain. CF(1) is attached to CF(0) by a central stalk formed by the gamma and epsilon chains, while a peripheral stalk is formed by the delta and b chains.

The protein resides in the cell membrane. It catalyses the reaction ATP + H2O + 4 H(+)(in) = ADP + phosphate + 5 H(+)(out). Its function is as follows. Produces ATP from ADP in the presence of a proton gradient across the membrane. The catalytic sites are hosted primarily by the beta subunits. The sequence is that of ATP synthase subunit beta from Clostridium botulinum (strain Loch Maree / Type A3).